The following is a 110-amino-acid chain: Large ribosomal subunit protein uL24 (110 aa).

Belongs to the universal ribosomal protein uL24 family. Part of the 50S ribosomal subunit.

Its function is as follows. One of two assembly initiator proteins, it binds directly to the 5'-end of the 23S rRNA, where it nucleates assembly of the 50S subunit. Functionally, one of the proteins that surrounds the polypeptide exit tunnel on the outside of the subunit. The sequence is that of Large ribosomal subunit protein uL24 from Desulfovibrio desulfuricans (strain ATCC 27774 / DSM 6949 / MB).